A 619-amino-acid polypeptide reads, in one-letter code: Chitinase C (619 aa).

The N-terminal stretch at 1 to 30 is a signal peptide; that stretch reads MRFRHKAAALAATLALPLAGLVGLASPAQA. One can recognise a CBM2 domain in the interval 31-134; that stretch reads ATSATATFAK…KLNGGSCDGT (104 aa). A Fibronectin type-III domain is found at 144–229; the sequence is APGTPTASNI…GAVKVTTTGG (86 aa). Residues 212–236 are disordered; it reads ADQTGPASGAVKVTTTGGGDGGNPG. Residues 227 to 236 are compositionally biased toward gly residues; it reads TGGGDGGNPG. The 380-residue stretch at 240-619 folds into the GH18 domain; sequence EVKMGYFTNW…TPAVRTTRRH (380 aa). Chitin is bound by residues 312 to 313 and 339 to 342; these read DQ and GGWT. The active-site Proton donor is Glu382. Chitin contacts are provided by residues Tyr383, 449 to 452, and Trp589; that span reads MTYD.

This sequence belongs to the glycosyl hydrolase 18 family. Chitinase class II subfamily.

The catalysed reaction is Random endo-hydrolysis of N-acetyl-beta-D-glucosaminide (1-&gt;4)-beta-linkages in chitin and chitodextrins.. The sequence is that of Chitinase C (chiC) from Streptomyces lividans.